A 1291-amino-acid polypeptide reads, in one-letter code: MTEKITLADALSNVEVLDELSLPDEQPCIEAQPCSIIYKANFDTNFEDRNGFVTGIAKYIEEATTHANLNVLLDEGQKHAVMLYTWRCCSRAIPQPKSNEQPNRVEIYEKTVEVLAPEVNKLLNFMYFQRKAIEAFSGEVKRLCHAEKRKDFVSEAYLLTLGKFINMFAVLDELKNMKSSVKNDYSTYRRAAQFLKVMSDSHTLQESQNLSMFLATQNKIRDTVKDTLEKIVGYEDLLSDVVNICVHMFETKMYLTPEEKHMLVKVMGFGLFLMDSDACNINKLDQKKKIRLDRIDRIFKNLEVVPLFGDMQIAPFNYIKRSKHFDSSKWPLSSSNAISPQADLMVHLPQIREDHVKYISELARYTNEVTTTVKENPSDAENRITADLALRGLQLLSEWTSVVTELYSWKLLHPTDHHQNKECPVEAEEYERATRYNYTSEEKFALIEVIAMIKGLQVLMARIETVLCEAIRRNIYSELQDFVQLSLREPLRKAVKNKKDLIRSIIMSVRETSADWQKGYEPTDDPVAKGKKDPDGGFRIQVPRLNVGPSSTQLYMVRTMLESLIADKSGGKRTLRKDIDGNCLLQIDTFHKTSFYWSYLLNFSDTLQKCCDLSQLWYREFYLEMTMGRKVNKCLVRHQHNEECKDLITMEKRIQFPIEMSMPWILTDHILQTKEPSMMEFVLYPLDLYNDSAYYALTVFRKQFLYDEVEAEVNLCFDQFVYKLSEQIFAHYKQLAGSIFLDKRFRLECEVLGFNFQSYPRNNRYETLLKQRHVQLLGRSIDLNKLITQRINANMHKSIELAISRFEGNDITGIVELEGLLEANRICHKLLSKYLALDNFDGMVKEANHNVLAPYGRITLHVFVELNYDFLVNYCYNAATNRFIRTKVNLSSSQAIQREKPPQMSHYYLWGSKQLNAAYSTQYGQYTGFVGSPHFHAMCRLLGYQGIAVVMDIILKDIVKPLIQGSLLQFTKTLMIAMPKSCKLPRCEYGSPGVLSYYQAHLTDIVQYPDAKTELFQSFREFGNSIIFCLLIEQALSQEEVCDLLHAALFQNIFPRPFCKENEKPEAKQKRLEAQFANLQIVSNVEKIGTAKQAMIAREGDLLTRERLCCGLSIFEVILNRVKSYLDDPVWCGPPPANGIIHVDECSEFHRLWSALQFVYCIPVRGTEYTIEELFGEGLNWAGCVMIVLLGQQRRFEALDFCYHILRVQRVDGKDEDVKGIQLKRMVDRIRRFQVLNSQIFSILNKYLKGGDGEGSNVEHVRCFPPPQHPSVISSSSHYQDPQKLRQSINN.

The tract at residues 1270 to 1291 (PSVISSSSHYQDPQKLRQSINN) is disordered. Over residues 1271–1291 (SVISSSSHYQDPQKLRQSINN) the composition is skewed to polar residues.

This sequence belongs to the CYFIP family. Interacts with Fmr1 and Rac1. Component of the WAVE complex composed of Hem/Kette, Scar/Wave and Cyfip where it binds through its C-terminus directly to Hem. In terms of tissue distribution, in the embryo, expressed mainly in the gut and in the developing central nervous system where high levels of expression are found in the CNS neuropile. Expression in the gut diminishes as development proceeds (at protein level). In the adult, expressed specifically in the nervous system.

The protein localises to the cytoplasm. Functionally, plays a role in guidance and morphology of central and peripheral axons and in synaptic morphology. Also required for formation of cell membrane protrusions and for bristle development. Plays a role in regulating mitochondrial activity, energy metabolism and membrane potential which maintains normal gamma-aminobutyric acid (GABA) signaling and ensures normal social behavior. This is Cytoplasmic FMR1-interacting protein from Drosophila melanogaster (Fruit fly).